The primary structure comprises 100 residues: Large ribosomal subunit protein uL23 (100 aa).

It belongs to the universal ribosomal protein uL23 family. As to quaternary structure, part of the 50S ribosomal subunit. Contacts protein L29, and trigger factor when it is bound to the ribosome.

Its function is as follows. One of the early assembly proteins it binds 23S rRNA. One of the proteins that surrounds the polypeptide exit tunnel on the outside of the ribosome. Forms the main docking site for trigger factor binding to the ribosome. The chain is Large ribosomal subunit protein uL23 from Corynebacterium aurimucosum (strain ATCC 700975 / DSM 44827 / CIP 107346 / CN-1) (Corynebacterium nigricans).